Consider the following 392-residue polypeptide: MLKPSIICLFLGILAKSSAGQFYFPNEAAQVPNYGRCITPNRERALCIHLEDCKYLYGLLTTTPLRDTDRLYLSRSQCGYTNGKVLICCPDRYRESSSETTPPPKPNVTSNSLLPLPGQCGNILSNRIYGGMKTKIDEFPWMALIEYTKSQGKKGHHCGGSLISTRYVITASHCVNGKALPTDWRLSGVRLGEWDTNTNPDCEVDVRGMKDCAPPHLDVPVERTIPHPDYIPASKNQVNDIALLRLAQQVEYTDFVRPICLPLDVNLRSATFDGITMDVAGWGKTEQLSASNLKLKAAVEGSRMDECQNVYSSQDILLEDTQMCAGGKEGVDSCRGDSGGPLIGLDTNKVNTYYFLAGVVSFGPTPCGLAGWPGVYTLVGKYVDWIQNTIES.

The first 19 residues, 1–19, serve as a signal peptide directing secretion; sequence MLKPSIICLFLGILAKSSA. A propeptide spans 20–127 (activation peptide); that stretch reads GQFYFPNEAA…GQCGNILSNR (108 aa). A Clip domain is found at 36–89; it reads RCITPNRERALCIHLEDCKYLYGLLTTTPLRDTDRLYLSRSQCGYTNGKVLICC. Cystine bridges form between Cys37–Cys88, Cys47–Cys78, and Cys53–Cys89. N-linked (GlcNAc...) asparagine glycosylation occurs at Asn107. Disulfide bonds link Cys120–Cys260, Cys158–Cys174, Cys202–Cys212, Cys307–Cys324, and Cys334–Cys367. The Peptidase S1 domain occupies 128–391; that stretch reads IYGGMKTKID…YVDWIQNTIE (264 aa). His173 functions as the Charge relay system in the catalytic mechanism. Ca(2+)-binding residues include Glu193, Asp195, Thr198, and Asp201. Asp240 (charge relay system) is an active-site residue. Ser338 (charge relay system) is an active-site residue.

The protein belongs to the peptidase S1 family. CLIP subfamily. Interacts with Spn27A; the two proteins are covalently linked leading to inhibition of ea catalytic activity. Interacts (via Peptidase domain) with snk (via N-terminal prodomain); leads to proteolytic activation of ea by snk. Sulfation of a vitelline membrane component by pip is required for proteolytic cleavage of ea by snk but not for the interaction of ea with snk. Proteolytically cleaved by snk. Activation peptide and active catalytic domain remain associated by a disulfide bond. Processed ea/easter is present in extremely low amounts in the early embryo as it is rapidly converted into a high molecular mass complex made up of ea covalently bound to the serpin Spn27A. Zymogen activation is also controlled by a negative feedback loop from Dorsal.

It is found in the secreted. Activated proteolytically by snk; activation requires both activation of the ndl-gd-snk protease cascade and sulfation of a vitelline membrane component by pip. Inhibited by binding of the serpin Spn27A. Its function is as follows. Component of the extracellular signaling pathway that establishes the dorsal-ventral pathway of the embryo. A protease cascade involving ndl, gd, snk and ea results in activation of the spz Toll receptor ligand; acts downstream of ndl, gd and snk and is required for proteolytic processing of spz. Activation of ea requires both activation of the ndl-gd-snk protease cascade and sulfation of a vitelline membrane component by pip. Localized activation of the Toll receptor in the ventral region of the embryo defines cell identities along the dorsal-ventral continuum. The sequence is that of Serine protease ea from Drosophila melanogaster (Fruit fly).